Consider the following 430-residue polypeptide: Purine nucleoside phosphorylase LACC1 (430 aa).

Lys247 carries the N6-acetyllysine modification. Zn(2+) contacts are provided by His250, Cys284, and His301.

The protein belongs to the purine nucleoside phosphorylase YfiH/LACC1 family. As to quaternary structure, interacts with FASN. Interacts with SDHA. Interacts with ATF6, EIF2AK3 and ERN1. In terms of processing, phosphorylated on tyrosine residues. As to expression, ubiquitously expressed, with higher expression levels in immune-related tissues such as lymph nodes and spleen. Expressed in both intestinal and peripheral myeloid-derived cells.

The protein localises to the cytoplasm. It localises to the nucleus. Its subcellular location is the endoplasmic reticulum. It is found in the peroxisome. It catalyses the reaction adenosine + phosphate = alpha-D-ribose 1-phosphate + adenine. It carries out the reaction inosine + phosphate = alpha-D-ribose 1-phosphate + hypoxanthine. The enzyme catalyses guanosine + phosphate = alpha-D-ribose 1-phosphate + guanine. The catalysed reaction is S-methyl-5'-thioadenosine + phosphate = 5-(methylsulfanyl)-alpha-D-ribose 1-phosphate + adenine. It catalyses the reaction adenosine + H2O + H(+) = inosine + NH4(+). Its function is as follows. Purine nucleoside enzyme that catalyzes the phosphorolysis of adenosine, guanosine and inosine nucleosides, yielding D-ribose 1-phosphate and the respective free bases, adenine, guanine and hypoxanthine. Also catalyzes the phosphorolysis of S-methyl-5'-thioadenosine into adenine and S-methyl-5-thio-alpha-D-ribose 1-phosphate. Also has adenosine deaminase activity. Acts as a regulator of innate immunity in macrophages by modulating the purine nucleotide metabolism, thereby regulating the metabolic function and bioenergetic state of macrophages. Enables a purine nucleotide cycle between adenosine and inosine monophosphate and adenylosuccinate that prevents cytoplasmic acidification and balances the cytoplasmic-mitochondrial redox interface. The purine nucleotide cycle consumes aspartate and releases fumarate in a manner involving fatty acid oxidation and ATP-citrate lyase activity. Participates in pattern recognition receptor (PRR)-induced cytokines in macrophages: associates with the NOD2-signaling complex and promotes optimal NOD2-induced signaling, cytokine secretion and bacterial clearance. Localizes to the endoplasmic reticulum upon PRR stimulation of macrophages and associates with endoplasmic reticulum-stress sensors, promoting the endoplasmic reticulum unfolded protein response (UPR). Does not show laccase activity. The polypeptide is Purine nucleoside phosphorylase LACC1 (Homo sapiens (Human)).